Consider the following 897-residue polypeptide: Probable basic-leucine zipper transcription factor R (897 aa).

Disordered stretches follow at residues 38-88 (DDNI…NIET) and 128-198 (YQQR…NSNS). The segment covering 44–75 (NNNNNNNNNNNNNNNNNNNNNNNNNNNNNNNN) has biased composition (low complexity). The span at 76 to 88 (IGSPQIMNENIET) shows a compositional bias: polar residues. The stretch at 94 to 137 (QYLERLQSIQQQQHQCQTQIQQQLQNYQQQYEDQYQQRQQQYQD) forms a coiled coil. The span at 128-140 (YQQRQQQYQDQYQ) shows a compositional bias: low complexity. The segment covering 141 to 157 (KPYSSPPLNFNSIPPIT) has biased composition (polar residues). The span at 158–198 (NNNNNNNNNNNNNNNNNNSNSNSNSNSNSNSNSNSNSNSNS) shows a compositional bias: low complexity. 2 coiled-coil regions span residues 228 to 258 (LQQQ…QQQQ) and 330 to 407 (QQLQ…QQQQ). The disordered stretch occupies residues 461–516 (LQLPTPFYSPQQQQQQHTPISSFIPPPSLPSSPPSPPSPPSPPPQQQQQQQQQQQQ). Positions 484 to 505 (IPPPSLPSSPPSPPSPPSPPPQ) are enriched in pro residues. Positions 506–516 (QQQQQQQQQQQ) are enriched in low complexity. A bZIP domain is found at 557-620 (ESKESIKKYN…SIEMMRMEPE (64 aa)). The tract at residues 559–564 (KESIKK) is basic motif. The tract at residues 569–576 (IASRNYRL) is leucine-zipper.

It belongs to the bZIP family.

Its subcellular location is the nucleus. Probable transcriptional regulator. The chain is Probable basic-leucine zipper transcription factor R (bzpR) from Dictyostelium discoideum (Social amoeba).